Reading from the N-terminus, the 684-residue chain is Dipeptidyl-peptidase 5 (684 aa).

Residues 1–24 (MNKKIFSMMAASIIGSAAMTPSAG) form the signal peptide. WD repeat units lie at residues 87 to 127 (DTES…TERR), 220 to 259 (KPWS…DIYI), and 323 to 363 (TFDY…GKIR). Residues serine 542, aspartate 627, and histidine 659 each act as charge relay system in the active site.

The protein belongs to the peptidase S9C family. Homodimer.

It localises to the periplasm. In terms of biological role, catalyzes the removal of dipeptides from the N-terminus of oligopeptides. Prefers Ala and hydrophobic residues except Pro at the P1 position, and has no preference for P2 residues. Shows high dipeptidyl peptidase activity toward the synthetic substrates Lys-Ala-, Gly-Phe-, Met-Leu-, and Ser-Tyr-methylcoumaryl-7-amide (MCA), and slowly hydrolyzes Val-Tyr-MCA. Is likely involved in amino acid metabolism and bacterial growth of asaccharolytic P.gingivalis, that utilizes amino acids from extracellular proteinaceous nutrients as energy and carbon sources. This is Dipeptidyl-peptidase 5 from Porphyromonas gingivalis (strain ATCC 33277 / DSM 20709 / CIP 103683 / JCM 12257 / NCTC 11834 / 2561).